Here is a 500-residue protein sequence, read N- to C-terminus: Lysine--tRNA ligase (500 aa).

Mg(2+)-binding residues include glutamate 410 and glutamate 417.

Belongs to the class-II aminoacyl-tRNA synthetase family. In terms of assembly, homodimer. It depends on Mg(2+) as a cofactor.

Its subcellular location is the cytoplasm. The enzyme catalyses tRNA(Lys) + L-lysine + ATP = L-lysyl-tRNA(Lys) + AMP + diphosphate. This is Lysine--tRNA ligase from Shewanella denitrificans (strain OS217 / ATCC BAA-1090 / DSM 15013).